Here is a 66-residue protein sequence, read N- to C-terminus: MMYCLPVVCILLLLIPSSATFVVESRLEKDQAQSFTGDAWKRVSPIHEMIQRSQCCAVKKNCCHVG.

Positions 1–20 (MMYCLPVVCILLLLIPSSAT) are cleaved as a signal peptide. Positions 21–51 (FVVESRLEKDQAQSFTGDAWKRVSPIHEMIQ) are excised as a propeptide. Valine 65 carries the post-translational modification Valine amide.

It belongs to the conotoxin T superfamily. In terms of processing, contains 2 disulfide bonds that can be either 'C1-C3, C2-C4' or 'C1-C4, C2-C3', since these disulfide connectivities have been observed for conotoxins with cysteine framework V (for examples, see AC P0DQQ7 and AC P81755). As to expression, expressed by the venom duct.

The protein resides in the secreted. Its function is as follows. Probable neurotoxin with unknown target. Possibly targets ion channels. This Californiconus californicus (California cone) protein is Conotoxin Cal5.2.